The primary structure comprises 100 residues: Urease subunit gamma (100 aa).

This sequence belongs to the urease gamma subunit family. Heterotrimer of UreA (gamma), UreB (beta) and UreC (alpha) subunits. Three heterotrimers associate to form the active enzyme.

It is found in the cytoplasm. It carries out the reaction urea + 2 H2O + H(+) = hydrogencarbonate + 2 NH4(+). It functions in the pathway nitrogen metabolism; urea degradation; CO(2) and NH(3) from urea (urease route): step 1/1. This chain is Urease subunit gamma, found in Verminephrobacter eiseniae (strain EF01-2).